The sequence spans 88 residues: Beta-insect excitatory toxin LqhIT1d (88 aa).

Positions 1–18 (MKFFLLFLVVLPIMGVLG) are cleaved as a signal peptide. The 64-residue stretch at 20-83 (KNGFAVDSNG…ISDTRKKLCD (64 aa)) folds into the LCN-type CS-alpha/beta domain. 4 cysteine pairs are disulfide-bonded: Cys34/Cys55, Cys40/Cys60, Cys44/Cys62, and Cys56/Cys82.

The protein belongs to the long (4 C-C) scorpion toxin superfamily. Sodium channel inhibitor family. Beta subfamily. Expressed by the venom gland.

The protein localises to the secreted. Excitatory insect toxins induce a spastic paralysis. They bind voltage-independently at site-4 of sodium channels (Nav) and shift the voltage of activation toward more negative potentials thereby affecting sodium channel activation and promoting spontaneous and repetitive firing. The protein is Beta-insect excitatory toxin LqhIT1d of Leiurus hebraeus (Hebrew deathstalker scorpion).